A 295-amino-acid chain; its full sequence is uncharacterized protein (295 aa).

The first 19 residues, 1–19, serve as a signal peptide directing secretion; it reads MFKKYIFILILFIASIARA. Positions 275–295 are disordered; that stretch reads RNNPPLKNNNAKGKNPYDTNK. Residues 276–295 are compositionally biased toward low complexity; sequence NNPPLKNNNAKGKNPYDTNK.

This is an uncharacterized protein from Rickettsia conorii (strain ATCC VR-613 / Malish 7).